The following is a 394-amino-acid chain: Elongation factor Tu 2 (394 aa).

Residues 10 to 204 (KPHVNVGTIG…YLDTYIPEPE (195 aa)) enclose the tr-type G domain. The interval 19-26 (GHVDHGKT) is G1. 19–26 (GHVDHGKT) is a binding site for GTP. Residue Thr-26 participates in Mg(2+) binding. Residues 60 to 64 (GITIN) form a G2 region. The segment at 81 to 84 (DCPG) is G3. GTP-binding positions include 81–85 (DCPGH) and 136–139 (NKCD). A G4 region spans residues 136–139 (NKCD). Residues 174 to 176 (SAL) form a G5 region.

It belongs to the TRAFAC class translation factor GTPase superfamily. Classic translation factor GTPase family. EF-Tu/EF-1A subfamily. In terms of assembly, monomer.

Its subcellular location is the cytoplasm. The catalysed reaction is GTP + H2O = GDP + phosphate + H(+). Its function is as follows. GTP hydrolase that promotes the GTP-dependent binding of aminoacyl-tRNA to the A-site of ribosomes during protein biosynthesis. The chain is Elongation factor Tu 2 from Yersinia enterocolitica serotype O:8 / biotype 1B (strain NCTC 13174 / 8081).